A 192-amino-acid polypeptide reads, in one-letter code: Epoxyqueuosine reductase QueH (192 aa).

[4Fe-4S] cluster is bound by residues Cys9, Cys10, Cys87, and Cys90. Cys169 and Cys171 form a disulfide bridge.

This sequence belongs to the QueH family.

It catalyses the reaction epoxyqueuosine(34) in tRNA + AH2 = queuosine(34) in tRNA + A + H2O. It functions in the pathway tRNA modification; tRNA-queuosine biosynthesis. Functionally, catalyzes the conversion of epoxyqueuosine (oQ) to queuosine (Q), which is a hypermodified base found in the wobble positions of tRNA(Asp), tRNA(Asn), tRNA(His) and tRNA(Tyr). This chain is Epoxyqueuosine reductase QueH, found in Thermotoga maritima (strain ATCC 43589 / DSM 3109 / JCM 10099 / NBRC 100826 / MSB8).